Reading from the N-terminus, the 960-residue chain is Importin alpha re-exporter (960 aa).

HEAT repeat units lie at residues 1-33 (MSDLETVAKFLAESVIASTAKTSERNLRQLETQ), 34-73 (DGFGLTLLHVIASTNLPLSTRLAGALFFKNFIKRKWVDEN), 74-120 (GNHL…FPDR), 121-157 (WPTLLSDLASRLSNDDMVTNKGVLTVAHSIFKRWRPL), 158-220 (FRSD…NCQD), 221-278 (IPEF…TRYE), 279-323 (DVFG…TRIP), 324-392 (KYFE…KEKN), 393-445 (EVLV…GVSS), 446-489 (TNNL…RNQL), 490-528 (TKAQLIELMPILATFLQTDEYVVYTYAAITIEKILTIRE), 529-586 (SNTS…TSED), 587-630 (SIQP…LNYT), 631-674 (QRQN…QSAT), 675-716 (IPES…SSIF), 717-751 (PDLVPVLGIFQRLIASKAYEVHGFDLLEHIMLLID), 752-794 (MNRL…NKLG), and 795-826 (SDFLIHFIDEVQDGLFQQIWGNFIITTLPTIG). Residues 23–96 (SERNLRQLET…KKEIVPLMIS (74 aa)) form the Importin N-terminal domain. Residues 366-381 (RRDLEGSDTDTRRRAC) carry the Nuclear localization signal motif. The stretch at 827–928 (NLLDRKIALI…RLYVAEALNK (102 aa)) is one HEAT 19; with insert repeat. The stretch at 929–960 (YNAISGNTFLNTILPQLTQENQVKLNQLLVGN) is one HEAT 20 repeat.

Belongs to the XPO2/CSE1 family. As to quaternary structure, binds with high affinity to SRP1 only in the presence of RanGTP. The complex is dissociated by the RanGTP-binding protein YRB1.

Its subcellular location is the cytoplasm. The protein resides in the nucleus. Functionally, export receptor for importin alpha (SRP1). Mediates importin-alpha re-export from the nucleus to the cytoplasm after import substrates have been released into the nucleoplasm. The protein is Importin alpha re-exporter (CSE1) of Saccharomyces cerevisiae (strain ATCC 204508 / S288c) (Baker's yeast).